A 283-amino-acid polypeptide reads, in one-letter code: Phosphatidylserine decarboxylase proenzyme (283 aa).

Residues D96, H152, and S250 each act as charge relay system; for autoendoproteolytic cleavage activity in the active site. S250 (schiff-base intermediate with substrate; via pyruvic acid; for decarboxylase activity) is an active-site residue. Residue S250 is modified to Pyruvic acid (Ser); by autocatalysis.

Belongs to the phosphatidylserine decarboxylase family. PSD-B subfamily. Prokaryotic type I sub-subfamily. In terms of assembly, heterodimer of a large membrane-associated beta subunit and a small pyruvoyl-containing alpha subunit. The cofactor is pyruvate. Is synthesized initially as an inactive proenzyme. Formation of the active enzyme involves a self-maturation process in which the active site pyruvoyl group is generated from an internal serine residue via an autocatalytic post-translational modification. Two non-identical subunits are generated from the proenzyme in this reaction, and the pyruvate is formed at the N-terminus of the alpha chain, which is derived from the carboxyl end of the proenzyme. The autoendoproteolytic cleavage occurs by a canonical serine protease mechanism, in which the side chain hydroxyl group of the serine supplies its oxygen atom to form the C-terminus of the beta chain, while the remainder of the serine residue undergoes an oxidative deamination to produce ammonia and the pyruvoyl prosthetic group on the alpha chain. During this reaction, the Ser that is part of the protease active site of the proenzyme becomes the pyruvoyl prosthetic group, which constitutes an essential element of the active site of the mature decarboxylase.

Its subcellular location is the cell membrane. The catalysed reaction is a 1,2-diacyl-sn-glycero-3-phospho-L-serine + H(+) = a 1,2-diacyl-sn-glycero-3-phosphoethanolamine + CO2. The protein operates within phospholipid metabolism; phosphatidylethanolamine biosynthesis; phosphatidylethanolamine from CDP-diacylglycerol: step 2/2. Catalyzes the formation of phosphatidylethanolamine (PtdEtn) from phosphatidylserine (PtdSer). This chain is Phosphatidylserine decarboxylase proenzyme, found in Acinetobacter baumannii (strain SDF).